A 391-amino-acid chain; its full sequence is MKNYKMNFIELQVTLSFCVVFLLRMLGIFSVLPILSKYGLYLNGGNKFLIGLAVGIYGATQIVFQIPFGILSDRFGRKQIIIFGLFIFFIGSLIVVSTNSIFGLIIGRAIQGSGAISGVSMALLSDLIRKENRIKSISIIGVSFAVSFLISVVSAPIIAENFGFFSIFWISAVFSIFSILIVFFLIPSSQNEILKNYKKNIYQKKIKFIFNKIFFRFYLGVFLLHFLLTMNFLIIPYEFELSGLALHYHWIVYFATIVFSFFFLFLIVFYFKFHFFLKNIIEICIFFIFLSLLLFLLSQHNLICLTFALQIFFIAFNILEIFFPSHLSQEISINYYKGSIMSIYSTSQFLGIACGGVLNGLLCTFFNTNHIFLFEIFITLIWFIFSFFCKK.

Transmembrane regions (helical) follow at residues 15-35 (LSFC…LPIL), 48-68 (FLIG…QIPF), 81-101 (IIFG…TNSI), 139-159 (IIGV…PIIA), 167-187 (IFWI…FLIP), 217-237 (FYLG…IIPY), 251-271 (IVYF…VFYF), 275-295 (FFLK…LLLF), 303-323 (ICLT…EIFF), 346-366 (TSQF…CTFF), and 369-389 (NHIF…SFFC).

The protein belongs to the major facilitator superfamily.

The protein localises to the cell membrane. This is an uncharacterized protein from Buchnera aphidicola subsp. Schizaphis graminum (strain Sg).